A 32-amino-acid chain; its full sequence is Dermaseptin-L1 (32 aa).

As to expression, expressed by the skin glands.

The protein resides in the secreted. Antimicrobial peptide active against the Gram-negative bacterium E.coli (MIC=8 uM) but inactive against the Gram-positive bacterium S.aureus. Also inhibits growth of zoospores of the chytrid fungus B.dendrobatidis at high concentrations (above 25 uM). Shows anticancer activities since it is cytolytic against HepG2 human hepatoma-derived cells (LC(50)=45 uM). Is only weakly hemolytic on human erythrocytes. The protein is Dermaseptin-L1 of Agalychnis lemur (Lemur leaf frog).